The primary structure comprises 221 residues: Transcription factor HES-4 (221 aa).

The segment covering 1 to 22 (MAADTPGKPSASPMAGAPASAS) has biased composition (low complexity). The interval 1-49 (MAADTPGKPSASPMAGAPASASRTPDKPRSAAEHRKSSKPVMEKRRRAR) is disordered. Positions 24–35 (TPDKPRSAAEHR) are enriched in basic and acidic residues. Positions 34–91 (HRKSSKPVMEKRRRARINESLAQLKTLILDALRKESSRHSKLEKADILEMTVRHLRSL) constitute a bHLH domain. The Orange domain occupies 110–143 (YRAGFHECLAEVNRFLAGCEGVPADVRSRLLGHL). The interval 201–221 (LPAAPRAGPQGPGGPWRPWLR) is disordered. A WRPW motif motif is present at residues 216 to 219 (WRPW).

In terms of assembly, transcription repression requires formation of a complex with a corepressor protein of the Groucho/TLE family.

It is found in the nucleus. In terms of biological role, transcriptional repressor. Binds DNA on N-box motifs: 5'-CACNAG-3'. The chain is Transcription factor HES-4 (HES4) from Homo sapiens (Human).